A 99-amino-acid polypeptide reads, in one-letter code: Translation initiation factor 1A (99 aa).

The S1-like domain occupies Arg11–Thr84.

This sequence belongs to the eIF-1A family.

In terms of biological role, seems to be required for maximal rate of protein biosynthesis. Enhances ribosome dissociation into subunits and stabilizes the binding of the initiator Met-tRNA(I) to 40 S ribosomal subunits. The protein is Translation initiation factor 1A (eIF1A) of Methanothermobacter thermautotrophicus (strain ATCC 29096 / DSM 1053 / JCM 10044 / NBRC 100330 / Delta H) (Methanobacterium thermoautotrophicum).